A 397-amino-acid chain; its full sequence is Monooxygenase 1 (397 aa).

Belongs to the 3-hydroxybenzoate 6-hydroxylase family. In terms of assembly, monomer. The cofactor is FAD. Expressed in seedlings, roots, leaves, flowers and siliques.

This Arabidopsis thaliana (Mouse-ear cress) protein is Monooxygenase 1.